The primary structure comprises 329 residues: Glycerol-3-phosphate dehydrogenase [NAD(P)+] (329 aa).

Positions 13, 14, 34, and 105 each coordinate NADPH. Sn-glycerol 3-phosphate-binding residues include Lys-105, Gly-134, and Ser-136. Residue Ala-138 participates in NADPH binding. Residues Lys-189, Asp-242, Ser-252, Arg-253, and Asn-254 each coordinate sn-glycerol 3-phosphate. Residue Lys-189 is the Proton acceptor of the active site. An NADPH-binding site is contributed by Arg-253. Val-277 and Glu-279 together coordinate NADPH.

This sequence belongs to the NAD-dependent glycerol-3-phosphate dehydrogenase family.

The protein localises to the cytoplasm. The catalysed reaction is sn-glycerol 3-phosphate + NAD(+) = dihydroxyacetone phosphate + NADH + H(+). It carries out the reaction sn-glycerol 3-phosphate + NADP(+) = dihydroxyacetone phosphate + NADPH + H(+). It participates in membrane lipid metabolism; glycerophospholipid metabolism. In terms of biological role, catalyzes the reduction of the glycolytic intermediate dihydroxyacetone phosphate (DHAP) to sn-glycerol 3-phosphate (G3P), the key precursor for phospholipid synthesis. This Legionella pneumophila (strain Paris) protein is Glycerol-3-phosphate dehydrogenase [NAD(P)+].